We begin with the raw amino-acid sequence, 420 residues long: Serine--tRNA ligase (420 aa).

Position 225-227 (225-227) interacts with L-serine; that stretch reads TLE. 256–258 is a binding site for ATP; it reads RQE. L-serine is bound at residue Glu279. An ATP-binding site is contributed by 343–346; that stretch reads EVSS. Position 379 (Thr379) interacts with L-serine.

It belongs to the class-II aminoacyl-tRNA synthetase family. Type-1 seryl-tRNA synthetase subfamily. As to quaternary structure, homodimer. The tRNA molecule binds across the dimer.

Its subcellular location is the cytoplasm. The enzyme catalyses tRNA(Ser) + L-serine + ATP = L-seryl-tRNA(Ser) + AMP + diphosphate + H(+). The catalysed reaction is tRNA(Sec) + L-serine + ATP = L-seryl-tRNA(Sec) + AMP + diphosphate + H(+). It functions in the pathway aminoacyl-tRNA biosynthesis; selenocysteinyl-tRNA(Sec) biosynthesis; L-seryl-tRNA(Sec) from L-serine and tRNA(Sec): step 1/1. In terms of biological role, catalyzes the attachment of serine to tRNA(Ser). Is also able to aminoacylate tRNA(Sec) with serine, to form the misacylated tRNA L-seryl-tRNA(Sec), which will be further converted into selenocysteinyl-tRNA(Sec). The polypeptide is Serine--tRNA ligase (Mycoplasma pneumoniae (strain ATCC 29342 / M129 / Subtype 1) (Mycoplasmoides pneumoniae)).